A 218-amino-acid chain; its full sequence is MEVEEAAYRTVWSEPPKRPAGRTKFRETRHPVYRGVRRRGGRPGAAGRWVCEVRVPGARGSRLWLGTFATAEAAARAHDAAALALRGRAACLNFADSAWRMPPVPASAALAGARGVRDAVAVAVEAFQRQSAAPSSPAETFADDGDEEEDNKDVLPVAAAEVFDAGAFELDDGFRFGGMDAGSYYASLAQGLLVEPPAAGAWWEDGELAGSDMPLWSY.

A disordered region spans residues 1-26 (MEVEEAAYRTVWSEPPKRPAGRTKFR). Residues 32–95 (VYRGVRRRGG…RGRAACLNFA (64 aa)) constitute a DNA-binding region (AP2/ERF). The segment at 131-151 (SAAPSSPAETFADDGDEEEDN) is disordered. Over residues 141–151 (FADDGDEEEDN) the composition is skewed to acidic residues.

It belongs to the AP2/ERF transcription factor family. ERF subfamily.

The protein resides in the nucleus. In terms of biological role, transcriptional activator that binds specifically to the DNA sequence 5'-[AG]CCGAC-3'. Binding to the C-repeat/DRE element mediates high salinity- and dehydration-inducible transcription. Confers resistance to high salt, cold and drought stress. The protein is Dehydration-responsive element-binding protein 1B (DREB1B) of Oryza sativa subsp. indica (Rice).